Here is a 564-residue protein sequence, read N- to C-terminus: H/ACA ribonucleoprotein complex non-core subunit NAF1 (564 aa).

Disordered regions lie at residues 1 to 29 (MESEQPAAVKASAPIEEPQSTETAVELGK), 108 to 218 (LVVQ…DSEG), 238 to 264 (DEDDEDFDEDGATGDRSRRRQPPKVRG), 387 to 489 (ASWE…HPSY), and 538 to 564 (PHMYPPPPPFAPPPPNNQSHQGQPPPS). Positions 146–157 (ASGLSLLAAYSS) are enriched in low complexity. Residues 238–249 (DEDDEDFDEDGA) are compositionally biased toward acidic residues. Thr-250 carries the post-translational modification Phosphothreonine. Ser-254 carries the post-translational modification Phosphoserine. Positions 388-402 (SWEHDVEPPARYVDH) are enriched in basic and acidic residues. Position 403 is a phosphoserine (Ser-403). Low complexity predominate over residues 426 to 446 (STDSVDTVTSVATTATKASSV). Phosphothreonine is present on Thr-427. Ser-429 carries the phosphoserine modification. Thr-432 is subject to Phosphothreonine. Polar residues predominate over residues 468-489 (PSINQHNQNQPQDEQYNFHPSY). A compositionally biased stretch (pro residues) spans 538–553 (PHMYPPPPPFAPPPPN). Residues 554–564 (NQSHQGQPPPS) show a composition bias toward polar residues.

This sequence belongs to the NAF1 family. In terms of assembly, during assembly of the complex, component of the box H/ACA small nucleolar ribonucleoprotein (H/ACA snoRNP) complex.

The protein localises to the nucleus. Its function is as follows. RNA-binding protein required for the maturation of the box H/ACA small nucleolar ribonucleoprotein (H/ACA snoRNP) complex and ribosome biogenesis. During assembly of the H/ACA snoRNP complex it associates with the complex and dissociates during complex maturation, becoming replaced by Gar1 to yield mature H/ACA snoRNP complex. This chain is H/ACA ribonucleoprotein complex non-core subunit NAF1, found in Drosophila melanogaster (Fruit fly).